Reading from the N-terminus, the 109-residue chain is Putative pterin-4-alpha-carbinolamine dehydratase (109 aa).

The protein belongs to the pterin-4-alpha-carbinolamine dehydratase family.

The catalysed reaction is (4aS,6R)-4a-hydroxy-L-erythro-5,6,7,8-tetrahydrobiopterin = (6R)-L-erythro-6,7-dihydrobiopterin + H2O. This Rickettsia canadensis (strain McKiel) protein is Putative pterin-4-alpha-carbinolamine dehydratase.